The following is a 322-amino-acid chain: ATP-dependent 6-phosphofructokinase 1 (322 aa).

An ATP-binding site is contributed by G11. ADP is bound at residue 21–25 (RAVVR). Residues 72-73 (RS) and 102-105 (GDGT) each bind ATP. Mg(2+) is bound at residue D103. 126 to 128 (TID) is a substrate binding site. D128 functions as the Proton acceptor in the catalytic mechanism. R155 contributes to the ADP binding site. Residues R163 and 170–172 (MGR) each bind substrate. ADP contacts are provided by residues 186 to 188 (GAE), R212, and 214 to 216 (KKS). Residues E223, R246, and 252 to 255 (HIQR) contribute to the substrate site.

The protein belongs to the phosphofructokinase type A (PFKA) family. ATP-dependent PFK group I subfamily. Prokaryotic clade 'B1' sub-subfamily. As to quaternary structure, homotetramer. Requires Mg(2+) as cofactor.

It localises to the cytoplasm. The enzyme catalyses beta-D-fructose 6-phosphate + ATP = beta-D-fructose 1,6-bisphosphate + ADP + H(+). Its pathway is carbohydrate degradation; glycolysis; D-glyceraldehyde 3-phosphate and glycerone phosphate from D-glucose: step 3/4. With respect to regulation, allosterically activated by ADP and other diphosphonucleosides. Allosterically inhibited by phosphoenolpyruvate which induces the dissociation of the active tetramer into an inactive two-subunit forms. In terms of biological role, catalyzes the phosphorylation of D-fructose 6-phosphate to fructose 1,6-bisphosphate by ATP, the first committing step of glycolysis. The chain is ATP-dependent 6-phosphofructokinase 1 from Thermus thermophilus (strain ATCC 27634 / DSM 579 / HB8).